Here is a 65-residue protein sequence, read N- to C-terminus: Large ribosomal subunit protein bL35 (65 aa).

Positions 1 to 15 (MPKMKTKSSAKKRFS) are enriched in basic residues. Residues 1 to 21 (MPKMKTKSSAKKRFSIRAGGS) form a disordered region.

The protein belongs to the bacterial ribosomal protein bL35 family.

The chain is Large ribosomal subunit protein bL35 from Dechloromonas aromatica (strain RCB).